Reading from the N-terminus, the 270-residue chain is Non-structural maintenance of chromosomes element 1 homolog (270 aa).

The RING-type; atypical zinc-finger motif lies at 185 to 226; the sequence is CNVCHKIAIQCQLCENCGIPLHLQCAGIYFRGIANPLCPNCK. The interval 236-270 is disordered; it reads LSQVSSQGPSHSQAAPVRGRNQRSRNISTVARTSR. Composition is skewed to polar residues over residues 237–248 and 259–270; these read SQVSSQGPSHSQ and SRNISTVARTSR.

It belongs to the NSE1 family. As to quaternary structure, component of the SMC5-SMC6 complex.

It is found in the nucleus. The protein resides in the chromosome. It localises to the telomere. It catalyses the reaction S-ubiquitinyl-[E2 ubiquitin-conjugating enzyme]-L-cysteine + [acceptor protein]-L-lysine = [E2 ubiquitin-conjugating enzyme]-L-cysteine + N(6)-ubiquitinyl-[acceptor protein]-L-lysine.. Its function is as follows. RING-type zinc finger-containing E3 ubiquitin ligase that assembles with melanoma antigen protein (MAGE) to catalyze the direct transfer of ubiquitin from E2 ubiquitin-conjugating enzyme to a specific substrate. Within MAGE-RING ubiquitin ligase complex, MAGE stimulates and specifies ubiquitin ligase activity likely through recruitment and/or stabilization of the E2 ubiquitin-conjugating enzyme at the E3:substrate complex. Involved in maintenance of genome integrity, DNA damage response and DNA repair. The chain is Non-structural maintenance of chromosomes element 1 homolog (nsmce1) from Xenopus tropicalis (Western clawed frog).